The sequence spans 515 residues: Glycosyltransferase family 92 protein F59C6.8 (515 aa).

A helical transmembrane segment spans residues 18–38; that stretch reads LFIFIAVCLGFLIAVTILAGL. The GT92 domain maps to 163–456; that stretch reads RKVVACFSPL…IEVCYNRIFY (294 aa).

The protein belongs to the glycosyltransferase 92 family.

The protein localises to the membrane. This chain is Glycosyltransferase family 92 protein F59C6.8, found in Caenorhabditis elegans.